The primary structure comprises 669 residues: Zinc finger MYM-type protein 5 (669 aa).

Residues Lys88, Lys91, Lys134, Lys149, Lys166, and Lys225 each participate in a glycyl lysine isopeptide (Lys-Gly) (interchain with G-Cter in SUMO2) cross-link. MYM-type zinc fingers lie at residues 265–299, 311–351, 358–393, and 404–431; these read HLFCSTTCLSSFSHKRTQNTRSIICKKDASTKKAN, QEFY…RHEV, HKLCSNHCFNKYRLANGLIMNCCEHCGEYMPSKSTG, and KRFCCQSCINEYKQMMETKSKKLTASEN. Glycyl lysine isopeptide (Lys-Gly) (interchain with G-Cter in SUMO2) cross-links involve residues Lys443, Lys455, Lys462, and Lys552.

Interacts (via N-terminal 120 amino acid region) with ETV5 (via C-terminal).

The protein localises to the nucleus. Functionally, functions as a transcriptional regulator. The polypeptide is Zinc finger MYM-type protein 5 (ZMYM5) (Homo sapiens (Human)).